The chain runs to 238 residues: tRNA (guanine-N(1)-)-methyltransferase (238 aa).

Residues glycine 110 and 129-134 each bind S-adenosyl-L-methionine; that span reads LGDFIL.

It belongs to the RNA methyltransferase TrmD family. In terms of assembly, homodimer.

The protein resides in the cytoplasm. The enzyme catalyses guanosine(37) in tRNA + S-adenosyl-L-methionine = N(1)-methylguanosine(37) in tRNA + S-adenosyl-L-homocysteine + H(+). In terms of biological role, specifically methylates guanosine-37 in various tRNAs. The sequence is that of tRNA (guanine-N(1)-)-methyltransferase from Clostridium botulinum (strain Alaska E43 / Type E3).